Consider the following 264-residue polypeptide: Wtf element wtf11 (264 aa).

The segment covering 1–12 (MNSNYVPLTSSV) has biased composition (polar residues). A disordered region spans residues 1–26 (MNSNYVPLTSSVDVEEKMESENGVDL). The next 4 helical transmembrane spans lie at 107–127 (LLFV…VIFG), 145–165 (LSWF…YDFW), 180–200 (WKNT…GFFV), and 217–237 (SLFA…FETL).

Belongs to the WTF family.

It localises to the membrane. Its function is as follows. May act in meiotic drive. This is Wtf element wtf11 from Schizosaccharomyces pombe (strain 972 / ATCC 24843) (Fission yeast).